The sequence spans 30 residues: GVPCGESCVYIPCFTGIINCSCRDKVCYNN.

Positions 1 to 30 (GVPCGESCVYIPCFTGIINCSCRDKVCYNN) form a cross-link, cyclopeptide (Gly-Asn). 3 cysteine pairs are disulfide-bonded: cysteine 4-cysteine 20, cysteine 8-cysteine 22, and cysteine 13-cysteine 27.

Post-translationally, this is a cyclic peptide. As to expression, detected in stems (at protein level).

In terms of biological role, probably participates in a plant defense mechanism. Has cytotoxic activity against HUVEC cells (LC(50)= 2.17 uM) and various cancer cells including HeLa (LC(50)= 3.05 uM), MCF-7 and K562. Displays very weak hemolytic activity. Binds to and induces leakage in phospholipd membranes, particularly ones containing 1-palmitoyl-2-oleophosphatidylethanolamine (POPE). This Pigea enneasperma (Spade flower) protein is Cyclotide hyen-E.